We begin with the raw amino-acid sequence, 143 residues long: Peptide methionine sulfoxide reductase MsrB (143 aa).

The MsrB domain maps to 16–139 (DAELRRRLTP…NSAALNFESR (124 aa)). Zn(2+) contacts are provided by Cys-55, Cys-58, Cys-104, and Cys-107. Cys-128 functions as the Nucleophile in the catalytic mechanism.

It belongs to the MsrB Met sulfoxide reductase family. Zn(2+) is required as a cofactor.

The enzyme catalyses L-methionyl-[protein] + [thioredoxin]-disulfide + H2O = L-methionyl-(R)-S-oxide-[protein] + [thioredoxin]-dithiol. This chain is Peptide methionine sulfoxide reductase MsrB, found in Burkholderia vietnamiensis (strain G4 / LMG 22486) (Burkholderia cepacia (strain R1808)).